We begin with the raw amino-acid sequence, 358 residues long: 3'(2'),5'-bisphosphate nucleotidase (358 aa).

Asp52 serves as the catalytic Proton acceptor. Mg(2+) contacts are provided by Glu78, Asp140, Ile142, and Asp143. Catalysis depends on Thr145, which acts as the Proton acceptor. Positions 145, 239, 263, 266, 280, and 292 each coordinate adenosine 3',5'-bisphosphate. Residues His239, Ser263, Lys266, Arg280, and Asp292 each contribute to the AMP site. A Mg(2+)-binding site is contributed by Asp292.

The protein belongs to the inositol monophosphatase superfamily. Mg(2+) serves as cofactor. As to expression, is constitutively transcribed in both roots and shoots.

The enzyme catalyses 3'-phosphoadenylyl sulfate + H2O = adenosine 5'-phosphosulfate + phosphate. It catalyses the reaction adenosine 3',5'-bisphosphate + H2O = AMP + phosphate. It carries out the reaction adenosine 2',5'-bisphosphate + H2O = AMP + phosphate. Inhibited by Ca(2+), Li(+), and Na(+) and activated by K(+). In terms of biological role, phosphatase that converts adenosine 3'-phosphate 5'-phosphosulfate (PAPS) to adenosine 5'-phosphosulfate (APS) and 3'(2')-phosphoadenosine 5'-phosphate (PAP) to AMP. May regulate the flux of sulfur in the sulfur-activation pathway by converting PAPS to APS. Shows no activity on myo-inositol 1-phosphate, beta-glycerol phosphate, NADPH, NADP and 5'-AMP. This chain is 3'(2'),5'-bisphosphate nucleotidase, found in Oryza sativa (Rice).